A 270-amino-acid chain; its full sequence is Splicing factor YJU2 (270 aa).

A disordered region spans residues methionine 1–asparagine 32. Cysteine 48, cysteine 51, cysteine 84, and cysteine 87 together coordinate Zn(2+). Residues proline 251–valine 270 form a disordered region. Residues tyrosine 258–valine 270 are compositionally biased toward basic residues.

Belongs to the CWC16 family. YJU2 subfamily. Component of the spliceosome. Present in the activated B complex, the catalytically activated B* complex which catalyzes the branching, the catalytic step 1 C complex catalyzing the exon ligation, and the postcatalytic P complex containing the ligated exons (mRNA) and the excised lariat intron. Belongs to the 40S cdc5-associated complex (or cwf complex), a spliceosome sub-complex reminiscent of a late-stage spliceosome composed of the U2, U5 and U6 snRNAs and at least brr2, cdc5, cwf2/prp3, cwf3/syf1, cwf4/syf3, cwf5/ecm2, spp42/cwf6, cwf7/spf27, cwf8, cwf9, cwf10, cwf11, cwf12, prp45/cwf13, cwf14, cwf15, cwf16, cwf17, cwf18, cwf19, cwf20, cwf21, cwf22, cwf23, cwf24, cwf25, cwf26, cyp7/cwf27, cwf28, cwf29/ist3, lea1, msl1, prp5/cwf1, prp10, prp12/sap130, prp17, prp22, sap61, sap62, sap114, sap145, slu7, smb1, smd1, smd3, smf1, smg1 and syf2.

The protein localises to the nucleus. In terms of biological role, part of the spliceosome which catalyzes two sequential transesterification reactions, first the excision of the non-coding intron from pre-mRNA and then the ligation of the coding exons to form the mature mRNA. Plays a role in stabilizing the structure of the spliceosome catalytic core and docking of the branch helix into the active site, producing 5'-exon and lariat intron-3'-intermediates. This chain is Splicing factor YJU2 (cwf16), found in Schizosaccharomyces pombe (strain 972 / ATCC 24843) (Fission yeast).